We begin with the raw amino-acid sequence, 616 residues long: Hemagglutinin-neuraminidase (616 aa).

Topologically, residues Met1–Arg26 are intravirion. Residues Ile27–Ser47 traverse the membrane as a helical segment. Topologically, residues Met48–Pro616 are virion surface. The N-linked (GlcNAc...) asparagine; by host glycan is linked to Asn119. The important for interaction with fusion/F protein stretch occupies residues Gly124 to Tyr152. Intrachain disulfides connect Cys172–Cys196, Cys186–Cys247, and Cys238–Cys251. An involved in neuraminidase activity region spans residues Asn234 to Ser239. N-linked (GlcNAc...) asparagine; by host glycosylation is found at Asn341 and Asn433. Disulfide bonds link Cys344–Cys461 and Cys455–Cys465. Asn481, Asn538, and Asn600 each carry an N-linked (GlcNAc...) asparagine; by host glycan. A disulfide bond links Cys531 and Cys542.

It belongs to the paramyxoviruses hemagglutinin-neuraminidase family. In terms of assembly, homotetramer; composed of disulfide-linked homodimers. Interacts with F protein trimer. Interacts with host CG-1B; this interaction inhibits viral adsorption and replication rather than internalization.

It localises to the virion membrane. Its subcellular location is the host cell membrane. The enzyme catalyses Hydrolysis of alpha-(2-&gt;3)-, alpha-(2-&gt;6)-, alpha-(2-&gt;8)- glycosidic linkages of terminal sialic acid residues in oligosaccharides, glycoproteins, glycolipids, colominic acid and synthetic substrates.. Its function is as follows. Mediates the viral entry into the host cell together with fusion/F protein. Attaches the virus to sialic acid-containing cell receptors and thereby initiates infection. Binding of HN protein to the receptor induces a conformational change that allows the F protein to trigger virion/cell membranes fusion. Functionally, neuraminidase activity ensures the efficient spread of the virus by dissociating the mature virions from the neuraminic acid containing glycoproteins. This Gallus gallus (Chicken) protein is Hemagglutinin-neuraminidase (HN).